The primary structure comprises 368 residues: MSQDLFNVPIFFILFRETTEAAIIISVLLSFLKRMFNTESPVYKRLRNQVWIGGAAGLFICLCIGAAFIAVYYTVLNDLWGNSEDIWEGVFSLVAVIMITAMGLAMLKTERMQEKWKVKLAKAMQKSNSEKSSFKEKLQKYAFFVLPFITVLREGLEAVVFIGGVSLGIQGKSIPIAAIMGIICGCLVGFLIYRGGSLIQLRWFFVFSTVVLYLVAAGLMAKGVGYLEQNAWNQVIGGEAADVISYRVSTAVWHVSWGDPEANNDTSGGWQIFNAILGWNNTATYGSIISYCLYWLFVCCYLVFSYFKEKRAAIRKAEAGEWDDGDEALENAKQYIGNDGEFIVEDKESDEEANNHPKEKIESDAIKA.

7 consecutive transmembrane segments (helical) span residues 8 to 28, 50 to 70, 86 to 106, 142 to 162, 173 to 193, 204 to 224, and 287 to 307; these read VPIF…ISVL, VWIG…AFIA, IWEG…GLAM, AFFV…VVFI, SIPI…FLIY, FFVF…AKGV, and SIIS…FSYF. The disordered stretch occupies residues 346–368; sequence DKESDEEANNHPKEKIESDAIKA. Basic and acidic residues predominate over residues 353 to 368; that stretch reads ANNHPKEKIESDAIKA.

The protein belongs to the oxidase-dependent Fe transporter (OFeT) (TC 9.A.10.1) family.

It is found in the cell membrane. Functionally, high affinity iron permease required for iron uptake in iron-depleted environments. Required for full virulence in mice. This is High affinity iron permease 1 from Rhizopus delemar (strain RA 99-880 / ATCC MYA-4621 / FGSC 9543 / NRRL 43880) (Mucormycosis agent).